Consider the following 918-residue polypeptide: MTDTNEKIRSLFLTALMVFSVFAGTIAFSGGAAAAANVSVQQAAEYDSGTVELALNGSTGSTVNTGDIDIYVDGNKNPSNYGVSSVDTTDDGTTGRLQFSLDQDVQPNRNLTVKVSGLTGGDNTVVAEDIDVTSQTIDADDDSGDTNAFRGEVLAIRADGDTDNDDATSSTKIVVEDSNGAVVTQDTYTANSKVYTYETENLDTGEEYEVSVAGDADENITISNLDLNVNIDDDVGDGANIDDKDTLAVNVSTTRGGEPANATLFNEDDDKVATQVESLKGNENVVFDFGNQSADDSPYYVKVTDNQTGVSAESDQINVSESDDGEASFESSTVQDNIGDVVNITVQVDNTEDAVINIGDENDDNYYIQGQLEDDNGDGEVTVQFNSYTAGNYSDSTVLSVPGDDDIDNIKEGGDYTRGSLSGDTLEAGSYSMNVTAGTSPDVTSPDTVGTLRLNENSVENIQTWAAPSDADIDDDDVDIYDRIGENLTQSDDVAAEDVVVHEIQASGIEGALEYEQEDGSASDVTEAFIAATDTTPYRINDSDATTSGLRLYVNRTDVGANADANPIDFSNSSDAVTVVDDPDNNTYFVAVDTSDVVFENGKTIVKEEDTRLNATFSVREGPLTDDRNSDSAIYTTSERDATLDLDDSGVVTVSAAAGQEVTGETNVAPGSELEVEMESESDANPFVIRPEVDVATDGTYTATADFQDYSAGTNFTVQTLDVDGDSDFSDEEDGRIVEADTATVSISEQESDGSEVVVDSAQLSEGGFIAIHAGNASGDVVGNSEYLGAGSHEDITVTLDEPMDEDFTAVAMPHQDTNGNEAYDFPGDDDPYTQNGSAVTDSANVTIVEEEQTEAPDTETETEAPDTETEEETDAPATDEPATDESETTAAEGPGFTAAIALIALVAAALLAVRRDN.

The first 34 residues, Met-1–Ala-34, serve as a signal peptide directing secretion. 7 N-linked (GlcNAc...) asparagine glycosylation sites follow: Asn-37, Asn-56, Asn-110, Asn-219, Asn-250, Asn-261, and Asn-291. N-linked (GalNAc...) asparagine glycosylation occurs at Asn-306. 14 N-linked (GlcNAc...) asparagine glycosylation sites follow: Asn-318, Asn-343, Asn-392, Asn-434, Asn-487, Asn-541, Asn-555, Asn-572, Asn-585, Asn-614, Asn-715, Asn-776, Asn-836, and Asn-845. Residues His-815–Gly-894 are disordered. The span at Tyr-833–Val-846 shows a compositional bias: polar residues. The segment covering Val-849–Asp-875 has biased composition (acidic residues). The chain crosses the membrane as a helical span at residues Gly-894 to Val-914. Residues Pro-895–Phe-897 carry the PGF sorting signal motif.

The protein belongs to the halobacterial S-layer protein family. N-glycosylated on Asn-306; this N-linked glycan is a branched trisaccharide containing 2-amino-6-sulfo-2,6-dideoxy-glucose (sulfoquinovosamine). In terms of processing, cleaved by the archaeosortase ArtA at the C-terminus, with removal of a short hydrophobic segment. Post-translationally, lipidation.

Its subcellular location is the secreted. The protein localises to the cell wall. The protein resides in the S-layer. It localises to the cell membrane. Its function is as follows. S-layer protein. The S-layer is a paracrystalline mono-layered assembly of proteins which coat the surface of the cell. In H.hispanica, the S-layer contains two different glycoproteins, Slg1 and Slg2, which share highly similar amino acid sequences. In Haloarcula hispanica (strain ATCC 33960 / DSM 4426 / JCM 8911 / NBRC 102182 / NCIMB 2187 / VKM B-1755), this protein is Cell surface glycoprotein 1.